The chain runs to 464 residues: Asparagine--tRNA ligase (464 aa).

Belongs to the class-II aminoacyl-tRNA synthetase family. In terms of assembly, homodimer.

It localises to the cytoplasm. The catalysed reaction is tRNA(Asn) + L-asparagine + ATP = L-asparaginyl-tRNA(Asn) + AMP + diphosphate + H(+). This Clostridium botulinum (strain Eklund 17B / Type B) protein is Asparagine--tRNA ligase.